The primary structure comprises 150 residues: D-aminoacyl-tRNA deacylase (150 aa).

A Gly-cisPro motif, important for rejection of L-amino acids motif is present at residues G138–P139.

This sequence belongs to the DTD family. As to quaternary structure, homodimer.

It is found in the cytoplasm. It carries out the reaction glycyl-tRNA(Ala) + H2O = tRNA(Ala) + glycine + H(+). It catalyses the reaction a D-aminoacyl-tRNA + H2O = a tRNA + a D-alpha-amino acid + H(+). Its function is as follows. An aminoacyl-tRNA editing enzyme that deacylates mischarged D-aminoacyl-tRNAs. Also deacylates mischarged glycyl-tRNA(Ala), protecting cells against glycine mischarging by AlaRS. Acts via tRNA-based rather than protein-based catalysis; rejects L-amino acids rather than detecting D-amino acids in the active site. By recycling D-aminoacyl-tRNA to D-amino acids and free tRNA molecules, this enzyme counteracts the toxicity associated with the formation of D-aminoacyl-tRNA entities in vivo and helps enforce protein L-homochirality. The polypeptide is D-aminoacyl-tRNA deacylase (Chlorobium phaeobacteroides (strain DSM 266 / SMG 266 / 2430)).